A 228-amino-acid polypeptide reads, in one-letter code: Phosphoglycolate phosphatase (228 aa).

D9 serves as the catalytic Nucleophile. The Mg(2+) site is built by D9 and D11. K151 contacts substrate. Positions 174 and 178 each coordinate Mg(2+).

The protein belongs to the archaeal SPP-like hydrolase family. Mg(2+) serves as cofactor.

It carries out the reaction 2-phosphoglycolate + H2O = glycolate + phosphate. Its function is as follows. Catalyzes the dephosphorylation of 2-phosphoglycolate. This is Phosphoglycolate phosphatase from Pyrobaculum islandicum (strain DSM 4184 / JCM 9189 / GEO3).